The primary structure comprises 144 residues: Large ribosomal subunit protein uL15 (144 aa).

The tract at residues 1 to 54 (MRLNTLSPAPGRVSAKKRVGRGIGSGLGKTAGRGHKGLKSRSGGSVKPGFEGGQ) is disordered. Residues 21 to 31 (RGIGSGLGKTA) are compositionally biased toward gly residues.

This sequence belongs to the universal ribosomal protein uL15 family. Part of the 50S ribosomal subunit.

Binds to the 23S rRNA. The chain is Large ribosomal subunit protein uL15 from Saccharophagus degradans (strain 2-40 / ATCC 43961 / DSM 17024).